A 579-amino-acid polypeptide reads, in one-letter code: Type II methyltransferase M.BseCI (579 aa).

This sequence belongs to the N(4)/N(6)-methyltransferase family.

The enzyme catalyses a 2'-deoxyadenosine in DNA + S-adenosyl-L-methionine = an N(6)-methyl-2'-deoxyadenosine in DNA + S-adenosyl-L-homocysteine + H(+). A gamma subtype methylase, recognizes the double-stranded sequence 5'-ATCGAT-3', methylation on A-5 on both strands, and protects the DNA from cleavage by the BanIII endonuclease. This Geobacillus stearothermophilus (Bacillus stearothermophilus) protein is Type II methyltransferase M.BseCI.